We begin with the raw amino-acid sequence, 507 residues long: DNA replication licensing factor MCM6 (507 aa).

Residues 32–239 (LYHNLCTSLF…TDYAIARRIV (208 aa)) form the MCM domain. The ATP site is built by histidine 45, serine 85, threonine 86, alanine 87, lysine 88, serine 89, and asparagine 190. The short motif at 214–217 (SRFD) is the Arginine finger element. ADP-binding residues include arginine 305 and glutamate 308. Lysine 329 is modified (N6-acetyllysine). A disordered region spans residues 365-392 (GPGGINGHADSPAPVNGFNGSGEDASQE). A phosphoserine mark is found at serine 375, serine 390, and serine 448. The residue at position 477 (threonine 477) is a Phosphothreonine.

It belongs to the MCM family. As to quaternary structure, component of the MCM2-7 complex. The complex forms a toroidal hexameric ring with the proposed subunit order MCM2-MCM6-MCM4-MCM7-MCM3-MCM5. Component of the CMG helicase complex, a hexameric ring of related MCM2-7 subunits stabilized by CDC45 and the tetrameric GINS complex. May interact with MCM10. Interacts with TIPIN. Interacts with CDT1. Interacts with MCMBP. Interacts with DDI2. O-glycosylated (O-GlcNAcylated), in a cell cycle-dependent manner.

It localises to the nucleus. It is found in the chromosome. The enzyme catalyses ATP + H2O = ADP + phosphate + H(+). Acts as a component of the MCM2-7 complex (MCM complex) which is the replicative helicase essential for 'once per cell cycle' DNA replication initiation and elongation in eukaryotic cells. Core component of CDC45-MCM-GINS (CMG) helicase, the molecular machine that unwinds template DNA during replication, and around which the replisome is built. The active ATPase sites in the MCM2-7 ring are formed through the interaction surfaces of two neighboring subunits such that a critical structure of a conserved arginine finger motif is provided in trans relative to the ATP-binding site of the Walker A box of the adjacent subunit. The six ATPase active sites, however, are likely to contribute differentially to the complex helicase activity. This Rattus norvegicus (Rat) protein is DNA replication licensing factor MCM6 (Mcm6).